The primary structure comprises 353 residues: D-alanine--D-alanine ligase A (353 aa).

In terms of domain architecture, ATP-grasp spans 141-346 (KRLVNEAGLS…YPEIINRLVA (206 aa)). 169–224 (EQALGLPIFIKPARQGSSVGVHKVVTEADYQAAMSDGFTYDDKLLAEEFIQAREVE) serves as a coordination point for ATP. The Mg(2+) site is built by Asp300, Glu313, and Asn315.

The protein belongs to the D-alanine--D-alanine ligase family. Mg(2+) serves as cofactor. Mn(2+) is required as a cofactor.

Its subcellular location is the cytoplasm. It carries out the reaction 2 D-alanine + ATP = D-alanyl-D-alanine + ADP + phosphate + H(+). It participates in cell wall biogenesis; peptidoglycan biosynthesis. Its function is as follows. Cell wall formation. This Brucella suis biovar 1 (strain 1330) protein is D-alanine--D-alanine ligase A.